A 164-amino-acid chain; its full sequence is DVAIVFNVEHTLSAVFLVPANKKVDGIIAAYPDPVKIWMHFARTVCNDKGRPTAIKIDFSKSELTLMNSPEFHLVFGECDGVKIQGIKIKRFEIEKDLTCGPGHGMSIGSLGKGNSRSEVSFVHLDGAKFIDTQNGLRSAVKIEDVTFKNANGYYTNPLNPPCK.

Belongs to the glycosyl hydrolase 28 family.

It localises to the secreted. The protein resides in the cell wall. It carries out the reaction (1,4-alpha-D-galacturonosyl)n+m + H2O = (1,4-alpha-D-galacturonosyl)n + (1,4-alpha-D-galacturonosyl)m.. This is Polygalacturonase from Cupressus sempervirens (Italian cypress).